Here is a 174-residue protein sequence, read N- to C-terminus: SUSHI domain-containing protein E3 (174 aa).

The N-terminal stretch at 1–20 (MATEVQFACALVVLLGCGYA) is a signal peptide. Residues 35 to 97 (QNCTTYPSIE…WTNGPPSCVK (63 aa)) enclose the Sushi domain. Cystine bridges form between Cys37–Cys78 and Cys64–Cys95. Low complexity predominate over residues 108 to 127 (STSTTPVTTGTFPDPQNTTH). Positions 108–133 (STSTTPVTTGTFPDPQNTTHPTHHTV) are disordered. A helical membrane pass occupies residues 145–165 (FGYTPWAIITLVVIILLVVWI).

It is found in the host membrane. This is SUSHI domain-containing protein E3 (E3) from Equine herpesvirus 2 (strain 86/87) (EHV-2).